A 314-amino-acid polypeptide reads, in one-letter code: tRNA dimethylallyltransferase 2 (314 aa).

8–15 (GPTGTGKS) provides a ligand contact to ATP. 10–15 (TGTGKS) contributes to the substrate binding site.

This sequence belongs to the IPP transferase family. Monomer. It depends on Mg(2+) as a cofactor.

The enzyme catalyses adenosine(37) in tRNA + dimethylallyl diphosphate = N(6)-dimethylallyladenosine(37) in tRNA + diphosphate. In terms of biological role, catalyzes the transfer of a dimethylallyl group onto the adenine at position 37 in tRNAs that read codons beginning with uridine, leading to the formation of N6-(dimethylallyl)adenosine (i(6)A). This Mycobacterium ulcerans (strain Agy99) protein is tRNA dimethylallyltransferase 2.